Consider the following 136-residue polypeptide: Serine--glyoxylate aminotransferase (136 aa).

The protein belongs to the class-V pyridoxal-phosphate-dependent aminotransferase family. As to quaternary structure, homodimer. Pyridoxal 5'-phosphate is required as a cofactor. Expressed in leaves but not in root tissue or seedlings.

It is found in the peroxisome. It carries out the reaction glyoxylate + L-serine = 3-hydroxypyruvate + glycine. The enzyme catalyses glyoxylate + L-alanine = glycine + pyruvate. Its activity is regulated as follows. Inhibited by aminooxyacetate. This is Serine--glyoxylate aminotransferase from Zea mays (Maize).